Consider the following 425-residue polypeptide: MPPRLRPGSVCSRCHFHRRSLSSTAFLAQKQAERPPPPPEAGHVRLVNRALISLTGADSTSFLQGLITQNVVSAKSRASPTTPFYAGFLNAQGRLLHDTFIYPTLPEENGGNEGMELGYLIEVDKEQVTNLLKHLKKHKLRAKLKFRALDEGERGVWAVWDNAKNWETKDTGDVLREVITCADNRAPAFGYRVLLAGDNLQNLSQPLPGQQASLSTYTLRRILHGIPEGQDELGRESALPMDSNMDIMGGIDFHKGCYLGQELTIRTHHRGVVRKRVLPVQLYNTEDPKPMPSSSGIPVYSPDSQLLLPSAGANITKSSASGKGRSAGKFISRIGNVGLALCRLETMTDISLTGESSQYNPSEEFKISWEANADAGVAEAGEVKVTAFIPPWVKDYILHGGTRQRQTKEDVHRAKSGTEQIEEED.

Residues 1–28 (MPPRLRPGSVCSRCHFHRRSLSSTAFLA) constitute a mitochondrion transit peptide. The segment at 403 to 425 (RQRQTKEDVHRAKSGTEQIEEED) is disordered.

The protein belongs to the GcvT family. CAF17/IBA57 subfamily.

Its subcellular location is the mitochondrion matrix. The polypeptide is Iron-sulfur cluster assembly factor IBA57 homolog, mitochondrial (CAF17) (Coccidioides immitis (strain RS) (Valley fever fungus)).